The chain runs to 328 residues: Formimidoylglutamase (328 aa).

Positions 133, 159, 161, 163, 253, and 255 each coordinate Mn(2+).

It belongs to the arginase family. Requires Mn(2+) as cofactor.

The enzyme catalyses N-formimidoyl-L-glutamate + H2O = formamide + L-glutamate. It functions in the pathway amino-acid degradation; L-histidine degradation into L-glutamate; L-glutamate from N-formimidoyl-L-glutamate (hydrolase route): step 1/1. Functionally, catalyzes the conversion of N-formimidoyl-L-glutamate to L-glutamate and formamide. This Streptococcus pyogenes serotype M1 protein is Formimidoylglutamase.